The following is a 121-amino-acid chain: Insertion element IS406 uncharacterized 13.3 kDa protein (121 aa).

This is Insertion element IS406 uncharacterized 13.3 kDa protein from Burkholderia multivorans (strain ATCC 17616 / 249).